The sequence spans 546 residues: Type II methyltransferase M.XhoI (546 aa).

This sequence belongs to the N(4)/N(6)-methyltransferase family.

It catalyses the reaction a 2'-deoxyadenosine in DNA + S-adenosyl-L-methionine = an N(6)-methyl-2'-deoxyadenosine in DNA + S-adenosyl-L-homocysteine + H(+). In terms of biological role, a gamma subtype methylase, recognizes the double-stranded sequence 5'-CTCGAG-3', methylates A-5 on both strands, and protects the DNA from cleavage by the XhoI endonuclease. This Xanthomonas vasicola protein is Type II methyltransferase M.XhoI.